A 179-amino-acid chain; its full sequence is Orotate phosphoribosyltransferase (179 aa).

5-phospho-alpha-D-ribose 1-diphosphate contacts are provided by residues arginine 94, lysine 95, lysine 98, histidine 100, and 120–128; that span reads EDTSTTGAS. Orotate-binding residues include threonine 124 and arginine 152.

It belongs to the purine/pyrimidine phosphoribosyltransferase family. PyrE subfamily. In terms of assembly, homodimer. Mg(2+) is required as a cofactor.

The enzyme catalyses orotidine 5'-phosphate + diphosphate = orotate + 5-phospho-alpha-D-ribose 1-diphosphate. It participates in pyrimidine metabolism; UMP biosynthesis via de novo pathway; UMP from orotate: step 1/2. Its function is as follows. Catalyzes the transfer of a ribosyl phosphate group from 5-phosphoribose 1-diphosphate to orotate, leading to the formation of orotidine monophosphate (OMP). The protein is Orotate phosphoribosyltransferase of Mycobacterium leprae (strain TN).